Reading from the N-terminus, the 631-residue chain is Dolichyl-diphosphooligosaccharide--protein glycosyltransferase subunit 2 (631 aa).

Residues 1–22 (MAPPGSSTVFLLALTIIASTWA) form the signal peptide. Residues 23-540 (LTPTHYLTKH…REPEKRPPTV (518 aa)) lie on the Lumenal side of the membrane. The N-linked (GlcNAc...) asparagine glycan is linked to Asn106. Lys154 is covalently cross-linked (Glycyl lysine isopeptide (Lys-Gly) (interchain with G-Cter in ubiquitin)). A helical transmembrane segment spans residues 541–561 (VSNTFTALILSPLLLLFALWI). Topologically, residues 562–571 (RIGANVSNFT) are cytoplasmic. Residues 572–592 (FAPSTIIFHLGHAAMLGLMYV) form a helical membrane-spanning segment. Over 593–596 (YWTQ) the chain is Lumenal. The helical transmembrane segment at 597 to 617 (LNMFQTLKYLAILGSVTFLAG) threads the bilayer. The Cytoplasmic portion of the chain corresponds to 618–631 (NRMLAQQAVKRTAH).

This sequence belongs to the SWP1 family. As to quaternary structure, component of the oligosaccharyltransferase (OST) complex. OST exists in two different complex forms which contain common core subunits RPN1, RPN2, OST48, OST4, DAD1 and TMEM258, either STT3A or STT3B as catalytic subunits, and form-specific accessory subunits. STT3A complex assembly occurs through the formation of 3 subcomplexes. Subcomplex 1 contains RPN1 and TMEM258, subcomplex 2 contains the STT3A-specific subunits STT3A, DC2/OSTC, and KCP2 as well as the core subunit OST4, and subcomplex 3 contains RPN2, DAD1, and OST48. The STT3A complex can form stable complexes with the Sec61 complex or with both the Sec61 and TRAP complexes. Interacts with DDI2. Interacts with TMEM35A/NACHO. Expressed in all tissues tested.

It is found in the endoplasmic reticulum. Its subcellular location is the endoplasmic reticulum membrane. It participates in protein modification; protein glycosylation. Functionally, subunit of the oligosaccharyl transferase (OST) complex that catalyzes the initial transfer of a defined glycan (Glc(3)Man(9)GlcNAc(2) in eukaryotes) from the lipid carrier dolichol-pyrophosphate to an asparagine residue within an Asn-X-Ser/Thr consensus motif in nascent polypeptide chains, the first step in protein N-glycosylation. N-glycosylation occurs cotranslationally and the complex associates with the Sec61 complex at the channel-forming translocon complex that mediates protein translocation across the endoplasmic reticulum (ER). All subunits are required for a maximal enzyme activity. This chain is Dolichyl-diphosphooligosaccharide--protein glycosyltransferase subunit 2, found in Homo sapiens (Human).